A 467-amino-acid polypeptide reads, in one-letter code: Bifunctional enzyme LpxC/FabZ (467 aa).

The interval 1–306 (MLIHQRTLQN…FVKQLKKYAD (306 aa)) is UDP-3-O-acyl-N-acetylglucosamine deacetylase. Zn(2+) is bound by residues H79, H264, and D268. The active-site Proton donor is the H291. The segment at 307-467 (RNKLARQYQH…LMATVMEKKN (161 aa)) is 3-hydroxyacyl-[acyl-carrier-protein] dehydratase. H370 is an active-site residue.

In the N-terminal section; belongs to the LpxC family. The protein in the C-terminal section; belongs to the thioester dehydratase family. It depends on Zn(2+) as a cofactor.

It is found in the cytoplasm. It catalyses the reaction a UDP-3-O-[(3R)-3-hydroxyacyl]-N-acetyl-alpha-D-glucosamine + H2O = a UDP-3-O-[(3R)-3-hydroxyacyl]-alpha-D-glucosamine + acetate. It carries out the reaction a (3R)-hydroxyacyl-[ACP] = a (2E)-enoyl-[ACP] + H2O. The protein operates within glycolipid biosynthesis; lipid IV(A) biosynthesis; lipid IV(A) from (3R)-3-hydroxytetradecanoyl-[acyl-carrier-protein] and UDP-N-acetyl-alpha-D-glucosamine: step 2/6. Functionally, catalyzes the hydrolysis of UDP-3-O-myristoyl-N-acetylglucosamine to form UDP-3-O-myristoylglucosamine and acetate, the committed step in lipid A biosynthesis. Its function is as follows. Involved in unsaturated fatty acids biosynthesis. Catalyzes the dehydration of short chain beta-hydroxyacyl-ACPs and long chain saturated and unsaturated beta-hydroxyacyl-ACPs. In Chlorobaculum tepidum (strain ATCC 49652 / DSM 12025 / NBRC 103806 / TLS) (Chlorobium tepidum), this protein is Bifunctional enzyme LpxC/FabZ (lpxC/fabZ).